Consider the following 357-residue polypeptide: 3-dehydroquinate synthase (357 aa).

Residues 99-103, 123-124, Lys135, Lys144, and 162-165 contribute to the NAD(+) site; these read GATGD, TT, and FLET. Zn(2+) is bound by residues Glu177, His247, and His261.

This sequence belongs to the sugar phosphate cyclases superfamily. Dehydroquinate synthase family. It depends on Co(2+) as a cofactor. Requires Zn(2+) as cofactor. NAD(+) is required as a cofactor.

The protein localises to the cytoplasm. It carries out the reaction 7-phospho-2-dehydro-3-deoxy-D-arabino-heptonate = 3-dehydroquinate + phosphate. It participates in metabolic intermediate biosynthesis; chorismate biosynthesis; chorismate from D-erythrose 4-phosphate and phosphoenolpyruvate: step 2/7. Functionally, catalyzes the conversion of 3-deoxy-D-arabino-heptulosonate 7-phosphate (DAHP) to dehydroquinate (DHQ). The chain is 3-dehydroquinate synthase from Macrococcus caseolyticus (strain JCSC5402) (Macrococcoides caseolyticum).